Here is a 355-residue protein sequence, read N- to C-terminus: uncharacterized protein (355 aa).

The signal sequence occupies residues 1 to 27 (MESPIRTARRTLPLLIGATCLVLALTG). Cys-28 carries the N-palmitoyl cysteine lipid modification. A lipid anchor (S-diacylglycerol cysteine) is attached at Cys-28. The interval 33–53 (GPAQARPTPSASTSPKQAPAL) is disordered. Positions 39–48 (PTPSASTSPK) are enriched in polar residues.

It is found in the cell membrane. This is an uncharacterized protein from Streptomyces coelicolor (strain ATCC BAA-471 / A3(2) / M145).